The chain runs to 249 residues: Homeobox protein TGIF2LX (249 aa).

Disordered regions lie at residues 1 to 62 (MEAA…KRKG) and 126 to 192 (DPIV…KLTV). Residues 9–27 (AETRSRVEKDSRRAKKDSP) are compositionally biased toward basic and acidic residues. Polar residues predominate over residues 28–46 (AKTQSPAQDTSIMLRNNAD). Residues 55-118 (EHKKKRKGYL…INARRRILPD (64 aa)) constitute a DNA-binding region (homeobox; TALE-type). The segment covering 159-172 (DNVQSLPLRSSPKG) has biased composition (polar residues).

It belongs to the TALE/TGIF homeobox family.

The protein resides in the nucleus. Functionally, may have a transcription role in testis. This is Homeobox protein TGIF2LX (TGIF2LX) from Macaca fascicularis (Crab-eating macaque).